Reading from the N-terminus, the 258-residue chain is Methanol--corrinoid protein (258 aa).

A B12-binding N-terminal domain is found at 30 to 124 (AEELYPKDEL…NSGATPKTKG (95 aa)). The region spanning 123–248 (KGTVVCHVAE…DAIIAGTTDV (126 aa)) is the B12-binding domain. Histidine 136 provides a ligand contact to methylcob(III)alamin.

Belongs to the methylamine corrinoid protein family. As to quaternary structure, heterotetramer, composed of 2 MtaB and 2 MtaC subunits.

In terms of biological role, harbors a corrinoid prosthetic group and acts as a methyl group carrier in methanogenesis in the methanol pathway. The methyl group of methanol is first transferred to the corrinoid prosthetic group of MtaC in the cob(I)amide oxidation state. This reaction is mediated by MtaB. The methyl group from MtaC is then transferred to coenzyme M by MtaA. The chain is Methanol--corrinoid protein (mtaC) from Methanosarcina barkeri (strain Fusaro / DSM 804).